We begin with the raw amino-acid sequence, 334 residues long: Biotin synthase (334 aa).

Positions 54–281 (QAIQLSTLLS…KSYVRLSAGR (228 aa)) constitute a Radical SAM core domain. [4Fe-4S] cluster contacts are provided by C69, C73, and C76. Residues C113, C144, C204, and R276 each contribute to the [2Fe-2S] cluster site.

Belongs to the radical SAM superfamily. Biotin synthase family. As to quaternary structure, homodimer. [4Fe-4S] cluster serves as cofactor. It depends on [2Fe-2S] cluster as a cofactor.

It catalyses the reaction (4R,5S)-dethiobiotin + (sulfur carrier)-SH + 2 reduced [2Fe-2S]-[ferredoxin] + 2 S-adenosyl-L-methionine = (sulfur carrier)-H + biotin + 2 5'-deoxyadenosine + 2 L-methionine + 2 oxidized [2Fe-2S]-[ferredoxin]. The protein operates within cofactor biosynthesis; biotin biosynthesis; biotin from 7,8-diaminononanoate: step 2/2. In terms of biological role, catalyzes the conversion of dethiobiotin (DTB) to biotin by the insertion of a sulfur atom into dethiobiotin via a radical-based mechanism. The protein is Biotin synthase of Haemophilus ducreyi (strain 35000HP / ATCC 700724).